Consider the following 504-residue polypeptide: MPFGCVTLGDKKNYNQPSEVTDRYDLGQVVKTEEFCEIFRAKDKTTGKLHTCKKFQKRDGRKVRKAAKNEIGILKMVKHPNILQLVDVFVTRKEYFIFLELATGREVFDWILDQGYYSERDTSNVVRQVLEAVAYLHSLKIVHRNLKLENLVYYNRLKNSKIVISDFHLAKLENGLIKEPCGTPEYLAPEVVGRQRYGRPVDCWAIGVIMYILLSGNPPFYEEVEEDDYENHDKNLFRKILAGDYEFDSPYWDDISQAAKDLVTRLMEVEQDQRITAEEAISHEWISGNAASDKNIKDGVCAQIEKNFARAKWKKAVRVTTLMKRLRAPEQSGTAATSDAATPGAAGGAVAAAAGGAAPASGASATVGTGGDAGCAAKSDDMASADRSATPATDGSATPATDGSVTPATDGSITPATDGSVTPATDRSATPATDGRATPATEESTVPAAQSSAAPAAKAAATPEPAVAQPDSTALEGATGQAPPSSKGEEATGCAQESQRVETS.

The Protein kinase domain maps to 24–286; sequence YDLGQVVKTE…AEEAISHEWI (263 aa). The interval 378-504 is disordered; it reads KSDDMASADR…AQESQRVETS (127 aa). Ser384 is subject to Phosphoserine. Polar residues predominate over residues 390–431; sequence TPATDGSATPATDGSVTPATDGSITPATDGSVTPATDRSATP. Residues Thr438 and Thr462 each carry the phosphothreonine modification. Residues 445 to 470 show a composition bias toward low complexity; it reads TVPAAQSSAAPAAKAAATPEPAVAQP.

It belongs to the protein kinase superfamily. CAMK Ser/Thr protein kinase family. In terms of assembly, interacts with calmodulin, in the presence of calcium. It depends on Ca(2+) as a cofactor. As to expression, expressed in brain and weakly in eye. Not detected in liver, kidney, spleen, thymus, bladder, aorta, lung, intestine, esophagus, stomach, skeletal muscle, heart, diaphragm, uterus, tail skin, submaxillary gland, prostate, ear, epididymis, placenta, pancreas, ovary, testis, adrenal gland, parathyroid gland, thyroid gland, pineal gland, pituitary and sciatic nerve. In adult hippocampus, predominantly expressed in caudate nucleus, cortex, hypothalamus, olfactory bulb, and midbrain and faintly in pons, brainstem and spinal cord.

The protein localises to the cell membrane. The protein resides in the cytoplasmic vesicle membrane. Its function is as follows. Has no detectable kinase activity in vitro. The sequence is that of CaM kinase-like vesicle-associated protein (Camkv) from Rattus norvegicus (Rat).